We begin with the raw amino-acid sequence, 520 residues long: Beta-2-syntrophin (520 aa).

Positions 45–95 are disordered; the sequence is EPPAAAFNGLPNGGGGESLPGSPNRGLGPPSPPAPPRGPAGEASASPPVRR. Residues 63-72 are compositionally biased toward low complexity; the sequence is LPGSPNRGLG. Positions 73–82 are enriched in pro residues; that stretch reads PPSPPAPPRG. Residues Ser-75, Ser-90, Ser-109, Ser-191, Ser-202, Ser-213, Ser-373, and Ser-375 each carry the phosphoserine modification. Over residues 83–93 the composition is skewed to low complexity; the sequence is PAGEASASPPV. The region spanning 95-178 is the PDZ domain; that stretch reads RVRVVKQEAG…EVLLEVKFIR (84 aa). PH domains lie at 143–280 and 305–417; these read ILSV…TNIM and EVKH…QGCH. Residues 195–220 form a disordered region; that stretch reads WEGASPQSPSFSGSEDSGSPKHQNTT. Residues 197–211 show a composition bias toward low complexity; it reads GASPQSPSFSGSEDS. The SU domain occupies 464 to 520; it reads PFERLKMSADDGIRNLYLDFGGPEGELTMDLHSCPKPIVFVLHTFLSAKVTRMGLLV. The calmodulin-binding stretch occupies residues 498–520; the sequence is PKPIVFVLHTFLSAKVTRMGLLV.

The protein belongs to the syntrophin family. In terms of assembly, monomer and homodimer. Interacts with the dystrophin protein DMD and related protein DTNA; and with the other members of the syntrophin family: SNTA1 and SNTB1. Interacts with the neuroregulin receptor ERBB4. Interacts with PTPRN when phosphorylated, protecting PTPRN from protein cleavage by CAPN1. Dephosphorylation upon insulin stimulation disrupts the interaction with PTPRN and results in the cleavage of PTPRN. Interacts with the sodium channel proteins SCN4A and SCN5A. Interacts with SAST, MAST205, microtubules and microtubule-associated proteins. Interacts with the dystrophin related protein UTRN. Interacts with DTNB. In terms of processing, phosphorylated. Partially dephosphorylated upon insulin stimulation. In terms of tissue distribution, ubiquitous. Expressed at high levels in the testis.

The protein localises to the membrane. The protein resides in the cytoplasmic vesicle. It localises to the secretory vesicle membrane. It is found in the cell junction. Its subcellular location is the cytoplasm. The protein localises to the cytoskeleton. Functionally, adapter protein that binds to and probably organizes the subcellular localization of a variety of membrane proteins. May link various receptors to the actin cytoskeleton and the dystrophin glycoprotein complex. May play a role in the regulation of secretory granules via its interaction with PTPRN. The protein is Beta-2-syntrophin (Sntb2) of Mus musculus (Mouse).